Reading from the N-terminus, the 192-residue chain is Ribosome maturation factor RimP (192 aa).

Belongs to the RimP family.

It is found in the cytoplasm. Required for maturation of 30S ribosomal subunits. This is Ribosome maturation factor RimP from Delftia acidovorans (strain DSM 14801 / SPH-1).